We begin with the raw amino-acid sequence, 475 residues long: Bifunctional protein HldE (475 aa).

The tract at residues 1–318 is ribokinase; that stretch reads MMQYSPKFNN…ENAIHHREET (318 aa). 195-198 provides a ligand contact to ATP; the sequence is NMSE. Asp-264 is a catalytic residue. Positions 344–475 are cytidylyltransferase; sequence MTNGCFDILH…NVIKKIQASK (132 aa).

In the N-terminal section; belongs to the carbohydrate kinase PfkB family. The protein in the C-terminal section; belongs to the cytidylyltransferase family. As to quaternary structure, homodimer.

The catalysed reaction is D-glycero-beta-D-manno-heptose 7-phosphate + ATP = D-glycero-beta-D-manno-heptose 1,7-bisphosphate + ADP + H(+). It catalyses the reaction D-glycero-beta-D-manno-heptose 1-phosphate + ATP + H(+) = ADP-D-glycero-beta-D-manno-heptose + diphosphate. It functions in the pathway nucleotide-sugar biosynthesis; ADP-L-glycero-beta-D-manno-heptose biosynthesis; ADP-L-glycero-beta-D-manno-heptose from D-glycero-beta-D-manno-heptose 7-phosphate: step 1/4. The protein operates within nucleotide-sugar biosynthesis; ADP-L-glycero-beta-D-manno-heptose biosynthesis; ADP-L-glycero-beta-D-manno-heptose from D-glycero-beta-D-manno-heptose 7-phosphate: step 3/4. In terms of biological role, catalyzes the phosphorylation of D-glycero-D-manno-heptose 7-phosphate at the C-1 position to selectively form D-glycero-beta-D-manno-heptose-1,7-bisphosphate. Its function is as follows. Catalyzes the ADP transfer from ATP to D-glycero-beta-D-manno-heptose 1-phosphate, yielding ADP-D-glycero-beta-D-manno-heptose. This is Bifunctional protein HldE from Actinobacillus pleuropneumoniae serotype 5b (strain L20).